The following is a 262-amino-acid chain: 3-methyl-2-oxobutanoate hydroxymethyltransferase (262 aa).

Residues aspartate 42 and aspartate 81 each coordinate Mg(2+). Residues 42 to 43 (DS), aspartate 81, and lysine 110 contribute to the 3-methyl-2-oxobutanoate site. A Mg(2+)-binding site is contributed by glutamate 112. The active-site Proton acceptor is the glutamate 179.

Belongs to the PanB family. In terms of assembly, homodecamer; pentamer of dimers. Mg(2+) serves as cofactor.

Its subcellular location is the cytoplasm. It catalyses the reaction 3-methyl-2-oxobutanoate + (6R)-5,10-methylene-5,6,7,8-tetrahydrofolate + H2O = 2-dehydropantoate + (6S)-5,6,7,8-tetrahydrofolate. It participates in cofactor biosynthesis; (R)-pantothenate biosynthesis; (R)-pantoate from 3-methyl-2-oxobutanoate: step 1/2. In terms of biological role, catalyzes the reversible reaction in which hydroxymethyl group from 5,10-methylenetetrahydrofolate is transferred onto alpha-ketoisovalerate to form ketopantoate. In Methylobacillus flagellatus (strain ATCC 51484 / DSM 6875 / VKM B-1610 / KT), this protein is 3-methyl-2-oxobutanoate hydroxymethyltransferase.